We begin with the raw amino-acid sequence, 80 residues long: Small ribosomal subunit protein uS17 (80 aa).

This sequence belongs to the universal ribosomal protein uS17 family. Part of the 30S ribosomal subunit.

Functionally, one of the primary rRNA binding proteins, it binds specifically to the 5'-end of 16S ribosomal RNA. The sequence is that of Small ribosomal subunit protein uS17 from Cereibacter sphaeroides (strain ATCC 17025 / ATH 2.4.3) (Rhodobacter sphaeroides).